Here is a 637-residue protein sequence, read N- to C-terminus: Biosynthetic arginine decarboxylase (637 aa).

Lys101 bears the N6-(pyridoxal phosphate)lysine mark. 286–296 (FDVGGGLAVDY) is a binding site for substrate.

It belongs to the Orn/Lys/Arg decarboxylase class-II family. SpeA subfamily. It depends on Mg(2+) as a cofactor. Requires pyridoxal 5'-phosphate as cofactor.

It catalyses the reaction L-arginine + H(+) = agmatine + CO2. It functions in the pathway amine and polyamine biosynthesis; agmatine biosynthesis; agmatine from L-arginine: step 1/1. In terms of biological role, catalyzes the biosynthesis of agmatine from arginine. The polypeptide is Biosynthetic arginine decarboxylase (Shewanella baltica (strain OS223)).